The sequence spans 311 residues: Putative prophage capsid protein YqbE (311 aa).

It belongs to the encapsulin family. Family 3 subfamily.

Functionally, possibly a prophage capsid protein. The sequence is that of Putative prophage capsid protein YqbE (yqbE) from Bacillus subtilis (strain 168).